A 339-amino-acid polypeptide reads, in one-letter code: Cyclin-D1-1 (339 aa).

Belongs to the cyclin family. Cyclin D subfamily. In terms of assembly, interacts with CDKA-1 and KRP6/ICK4. In terms of tissue distribution, expressed in roots, leaves and flowers.

Functionally, may activate cell cycle in the root apical meristem (RAM) and promote embryonic root (radicle) protrusion. This chain is Cyclin-D1-1 (CYCD1-1), found in Arabidopsis thaliana (Mouse-ear cress).